A 294-amino-acid polypeptide reads, in one-letter code: ATP synthase gamma chain (294 aa).

Belongs to the ATPase gamma chain family. In terms of assembly, F-type ATPases have 2 components, CF(1) - the catalytic core - and CF(0) - the membrane proton channel. CF(1) has five subunits: alpha(3), beta(3), gamma(1), delta(1), epsilon(1). CF(0) has three main subunits: a, b and c.

It is found in the cell inner membrane. Produces ATP from ADP in the presence of a proton gradient across the membrane. The gamma chain is believed to be important in regulating ATPase activity and the flow of protons through the CF(0) complex. This Paramagnetospirillum magneticum (strain ATCC 700264 / AMB-1) (Magnetospirillum magneticum) protein is ATP synthase gamma chain.